The following is a 435-amino-acid chain: ATP-dependent protease ATPase subunit HslU (435 aa).

ATP contacts are provided by residues I18, G60–E65, D248, E313, and R385.

It belongs to the ClpX chaperone family. HslU subfamily. In terms of assembly, a double ring-shaped homohexamer of HslV is capped on each side by a ring-shaped HslU homohexamer. The assembly of the HslU/HslV complex is dependent on binding of ATP.

It is found in the cytoplasm. In terms of biological role, ATPase subunit of a proteasome-like degradation complex; this subunit has chaperone activity. The binding of ATP and its subsequent hydrolysis by HslU are essential for unfolding of protein substrates subsequently hydrolyzed by HslV. HslU recognizes the N-terminal part of its protein substrates and unfolds these before they are guided to HslV for hydrolysis. This is ATP-dependent protease ATPase subunit HslU from Ruegeria pomeroyi (strain ATCC 700808 / DSM 15171 / DSS-3) (Silicibacter pomeroyi).